Reading from the N-terminus, the 338-residue chain is MKVYYDSDADLGLIQSKKVAIIGYGSQGHAHALNLKDSGVDVVVGLRAGSSSWMKAEGSGLQVAEVADAVGGADLVMMLVPDEHQAKIYREQIAPNLKDDAALVFAHGFNIHYGQIEAPAGVDVFLVAPKGPGHLVRAEYLRGGGVPSLVAIHQNATGKALDLALSYASANGGGRAGIIETSFKEETETDLFGEQAVLCGGITALIQAGFETLVEAGYAPEMAYFECLHETKLIVDLIYEGGIANMRYSISNTAEYGDLTRGPRVITEETKKEMKKILDEIQTGEFPREWISENISGRPKFLGLRRRGEAHQIEQVGAKLRAMMPWIQASKLVDKAKN.

The KARI N-terminal Rossmann domain maps to Met1–Thr181. NADP(+)-binding positions include Tyr24 to Gln27, Arg47, Ser50, Ser52, and Asp82 to Gln85. The active site involves His107. An NADP(+)-binding site is contributed by Gly133. Residues Ser182–Ile327 form the KARI C-terminal knotted domain. Mg(2+) is bound by residues Asp190, Glu194, Glu226, and Glu230. Ser251 is a substrate binding site.

Belongs to the ketol-acid reductoisomerase family. It depends on Mg(2+) as a cofactor.

The catalysed reaction is (2R)-2,3-dihydroxy-3-methylbutanoate + NADP(+) = (2S)-2-acetolactate + NADPH + H(+). The enzyme catalyses (2R,3R)-2,3-dihydroxy-3-methylpentanoate + NADP(+) = (S)-2-ethyl-2-hydroxy-3-oxobutanoate + NADPH + H(+). It participates in amino-acid biosynthesis; L-isoleucine biosynthesis; L-isoleucine from 2-oxobutanoate: step 2/4. Its pathway is amino-acid biosynthesis; L-valine biosynthesis; L-valine from pyruvate: step 2/4. Involved in the biosynthesis of branched-chain amino acids (BCAA). Catalyzes an alkyl-migration followed by a ketol-acid reduction of (S)-2-acetolactate (S2AL) to yield (R)-2,3-dihydroxy-isovalerate. In the isomerase reaction, S2AL is rearranged via a Mg-dependent methyl migration to produce 3-hydroxy-3-methyl-2-ketobutyrate (HMKB). In the reductase reaction, this 2-ketoacid undergoes a metal-dependent reduction by NADPH to yield (R)-2,3-dihydroxy-isovalerate. This is Ketol-acid reductoisomerase (NADP(+)) from Magnetococcus marinus (strain ATCC BAA-1437 / JCM 17883 / MC-1).